A 759-amino-acid chain; its full sequence is Serine/threonine-protein kinase HRK1 (759 aa).

A disordered region spans residues 1-32 (MPNLLSRNPFHGHHNDHHHDRENSSNNPPQLI). Residue Ser-37 is modified to Phosphoserine. Positions 45-162 (KQSNDSLRSE…PPPSKSTSTV (118 aa)) are disordered. Residues 59–97 (SMKSTTTTTNYTTTNLNNNTHSHSNATSISTNNYNNNYE) are compositionally biased toward low complexity. The span at 113 to 122 (SPASPKQTHS) shows a compositional bias: polar residues. Residues 215–722 (GKLGKLLGSG…LDDIFNDEWF (508 aa)) form the Protein kinase domain. Residues 221–229 (LGSGAGGSV) and Lys-244 each bind ATP. Asp-340 (proton acceptor) is an active-site residue. Phosphoserine occurs at positions 382 and 472. Polar residues predominate over residues 493–502 (PNTPASIQGK). 2 disordered regions span residues 493-578 (PNTP…GRVD) and 614-682 (AANA…KIIH). A Phosphothreonine modification is found at Thr-495. Ser-498 bears the Phosphoserine mark. Residues 510–519 (VEEETEENKE) show a composition bias toward acidic residues. Over residues 520–547 (DDSNNDKESTPDNDKESTIDIKISKNEN) the composition is skewed to basic and acidic residues. Positions 614–646 (AANANPDMVPQNNPQQQQQQQQQQQQQQQQQQQ) are enriched in low complexity. The span at 663 to 672 (ASDNKSSQQH) shows a compositional bias: polar residues.

This sequence belongs to the protein kinase superfamily. Ser/Thr protein kinase family.

Its subcellular location is the cytoplasm. It catalyses the reaction L-seryl-[protein] + ATP = O-phospho-L-seryl-[protein] + ADP + H(+). The catalysed reaction is L-threonyl-[protein] + ATP = O-phospho-L-threonyl-[protein] + ADP + H(+). Involved in regulating the activity of the plasma membrane proton pump PMA1. The sequence is that of Serine/threonine-protein kinase HRK1 (HRK1) from Saccharomyces cerevisiae (strain ATCC 204508 / S288c) (Baker's yeast).